We begin with the raw amino-acid sequence, 73 residues long: Small ribosomal subunit protein bS18c (73 aa).

It belongs to the bacterial ribosomal protein bS18 family. As to quaternary structure, part of the 30S ribosomal subunit.

The protein resides in the plastid. The protein localises to the chloroplast. This Rhodomonas salina (Cryptomonas salina) protein is Small ribosomal subunit protein bS18c.